The chain runs to 201 residues: Nucleoside triphosphate pyrophosphatase (201 aa).

Catalysis depends on D77, which acts as the Proton acceptor.

It belongs to the Maf family. A divalent metal cation serves as cofactor.

It is found in the cytoplasm. The enzyme catalyses a ribonucleoside 5'-triphosphate + H2O = a ribonucleoside 5'-phosphate + diphosphate + H(+). It catalyses the reaction a 2'-deoxyribonucleoside 5'-triphosphate + H2O = a 2'-deoxyribonucleoside 5'-phosphate + diphosphate + H(+). In terms of biological role, nucleoside triphosphate pyrophosphatase. May have a dual role in cell division arrest and in preventing the incorporation of modified nucleotides into cellular nucleic acids. In Rickettsia akari (strain Hartford), this protein is Nucleoside triphosphate pyrophosphatase.